The chain runs to 204 residues: Pyrrolidone-carboxylate peptidase (204 aa).

Residues Glu-80, Cys-142, and His-165 contribute to the active site.

The protein belongs to the peptidase C15 family. In terms of assembly, homotetramer.

It localises to the cytoplasm. It catalyses the reaction Release of an N-terminal pyroglutamyl group from a polypeptide, the second amino acid generally not being Pro.. Functionally, removes 5-oxoproline from various penultimate amino acid residues except L-proline. The chain is Pyrrolidone-carboxylate peptidase from Lysinibacillus sphaericus (strain C3-41).